The sequence spans 151 residues: Large ribosomal subunit protein eL8 (151 aa).

This sequence belongs to the eukaryotic ribosomal protein eL8 family. In terms of assembly, part of the 50S ribosomal subunit. Probably part of the RNase P complex.

It is found in the cytoplasm. Multifunctional RNA-binding protein that recognizes the K-turn motif in ribosomal RNA, the RNA component of RNase P, box H/ACA, box C/D and box C'/D' sRNAs. The sequence is that of Large ribosomal subunit protein eL8 from Pyrobaculum neutrophilum (strain DSM 2338 / JCM 9278 / NBRC 100436 / V24Sta) (Thermoproteus neutrophilus).